Consider the following 507-residue polypeptide: ATP synthase subunit alpha, chloroplastic (507 aa).

Glycine 170–threonine 177 lines the ATP pocket.

Belongs to the ATPase alpha/beta chains family. As to quaternary structure, F-type ATPases have 2 components, CF(1) - the catalytic core - and CF(0) - the membrane proton channel. CF(1) has five subunits: alpha(3), beta(3), gamma(1), delta(1), epsilon(1). CF(0) has four main subunits: a, b, b' and c.

It localises to the plastid. Its subcellular location is the chloroplast thylakoid membrane. The catalysed reaction is ATP + H2O + 4 H(+)(in) = ADP + phosphate + 5 H(+)(out). Functionally, produces ATP from ADP in the presence of a proton gradient across the membrane. The alpha chain is a regulatory subunit. The polypeptide is ATP synthase subunit alpha, chloroplastic (Ceratophyllum demersum (Rigid hornwort)).